A 1499-amino-acid polypeptide reads, in one-letter code: ABC multidrug transporter A-2 (1499 aa).

Disordered regions lie at residues 1–66 (MAMQ…IDQE) and 80–107 (QISQKSAGPTNTFLDPSSDPELDPNSDK). Polar residues predominate over residues 16 to 30 (ISSSAGQEVASTIRR). Residues 31–51 (QFTDADADRIVETPLGEKADS) are compositionally biased toward basic and acidic residues. A compositionally biased stretch (polar residues) spans 80-94 (QISQKSAGPTNTFLD). The ABC transporter 1 domain occupies 166-415 (LRSILGCRNR…FIDMGFDCPD (250 aa)). Residue Asn-339 is glycosylated (N-linked (GlcNAc...) asparagine). 5 helical membrane passes run 526–546 (MTLATVIGNSIMAFIVSSVFY), 561–581 (LLFFAILLNAFASSLEILTLW), 606–626 (MIVDLPSKFLVSVVFNLILYF), 635–655 (GHFFVFYLFSVTITLTMSNIF), and 669–689 (MVPSSIFMMILVIYTGFTIPV). N-linked (GlcNAc...) asparagine glycosylation is present at Asn-763. Residues 778 to 798 (GIILGFFFFFLAAYIICSELV) traverse the membrane as a helical segment. The ABC transporter 2 domain maps to 857 to 1100 (FHWQDVCYDI…LIKYFENKGS (244 aa)). 893 to 900 (GVTGAGKT) contributes to the ATP binding site. The next 5 helical transmembrane spans lie at 1193-1213 (YIYSKAATSIIPPLFIGFTFW), 1227-1247 (FAIFMLLVIFPNLVQQMMPYF), 1268-1288 (AFMLASILVELPWNILMAVPA), 1317-1337 (LLILIFMMFTSTFSSMIIAGI), and 1353-1373 (LCLIFNGVLASPSALPGFWIF). N-linked (GlcNAc...) asparagine glycosylation is present at Asn-1414. Residues 1466–1486 (GLLFVYIVFNIFAAIFLYWLI) traverse the membrane as a helical segment.

This sequence belongs to the ABC transporter superfamily. ABCG family. PDR (TC 3.A.1.205) subfamily.

The protein localises to the cell membrane. It catalyses the reaction itraconazole(in) + ATP + H2O = itraconazole(out) + ADP + phosphate + H(+). The catalysed reaction is voriconazole(in) + ATP + H2O = voriconazole(out) + ADP + phosphate + H(+). With respect to regulation, the efflux inhibitor FK506 impairs the transport activity. Functionally, pleiotropic ABC efflux transporter that confers resistance to structurally and functionally unrelated compounds including azoles such as itraconazole, posaconazole, and voriconazole. The polypeptide is ABC multidrug transporter A-2 (Aspergillus fumigatus (strain ATCC MYA-4609 / CBS 101355 / FGSC A1100 / Af293) (Neosartorya fumigata)).